Here is a 77-residue protein sequence, read N- to C-terminus: U10-lycotoxin-Ls1b (77 aa).

Positions 1–20 (MKLIIFTGLVLFAIVSLIEA) are cleaved as a signal peptide. Positions 21-26 (EEESGR) are excised as a propeptide.

It belongs to the neurotoxin 19 (CSTX) family. 09 (U10-Lctx) subfamily. Contains 4 disulfide bonds. As to expression, expressed by the venom gland.

Its subcellular location is the secreted. The polypeptide is U10-lycotoxin-Ls1b (Lycosa singoriensis (Wolf spider)).